Here is a 102-residue protein sequence, read N- to C-terminus: Small ribosomal subunit protein bS20 (102 aa).

It belongs to the bacterial ribosomal protein bS20 family.

In terms of biological role, binds directly to 16S ribosomal RNA. The polypeptide is Small ribosomal subunit protein bS20 (Gloeobacter violaceus (strain ATCC 29082 / PCC 7421)).